A 1652-amino-acid polypeptide reads, in one-letter code: Maestro heat-like repeat-containing protein family member 1 (1652 aa).

7 HEAT repeats span residues 3–41 (ETYAKRLSAILLDAVTDKDPQMQEQVCGALCDFGESKPA), 260–300 (EEQL…VGSR), 344–382 (CCSPDRLLAFLLPKLDTSNERTRVGTLQVLRHVINAAAA), 385–423 (EVKKPVILSSMKLPLLDTNNKVKRAVVQVVSAMAHHGYL), 1369–1407 (LMLLESLLYNLMARQKDTSARVRRLVLHGLANITLGSPD), 1410–1448 (QTHSPQLLTAMIGGLDDGDDPHSLVALEAMVGLARLMDL), and 1616–1652 (QVDLEQLLTALQLLLKDPALKVRLKAVKTLGRLVKFA).

Belongs to the MROH1 family. In terms of assembly, homooligomer; homooligomerizes at lysosome scission sites.

It is found in the lysosome membrane. Lysosome fission factor. Recruited to lysosomes by RAB7 (RAB7A or RAB7B) at scission sites and homooligomerizes to mediate the constriction and scission of lysosomal tubules. May sever membranes by inserting amphipathic helices into one bilayer leaflet. Lysosome fission is required to maintain their steady-state number, shape, size, composition and function, and to accomplish regeneration. The polypeptide is Maestro heat-like repeat-containing protein family member 1 (MROH1) (Bos taurus (Bovine)).